Reading from the N-terminus, the 439-residue chain is MFNNAIRKTSICVALTLAFSANAMAVTEIPFWHSMEGELGVEVNSLADRFNQSHSDYKIVPVYKGNYEQSLAAGIAAFRSGKAPAILQVYEVGTATMMASKAIKPVFQVFKDANINFDESVFVPTVAGYYTDAKTGHLLSQPFNSSTPVLYYNKDAFKKAGLNPDQPPKTWQELAEDTAKLRAAGSSCGYASGWQGWIQIENFSAWHGQPIASRNNGFDGTDAVLEFNKPLQVKHIQLLSDMNKKGDFTYFGRKDESTAKFYNGDCAITTASSGSLADIRHYAKFNYGVGMMPYDADAKDAPQNAIIGGASLWVMDGKDKDTYKGVAEFLQFLTQPEIAAEWHQKTGYLPITTAAYELTKQQGFYDKNPGADVATRQMLNKPPLPYTKGLRLGNMPQIRTVVDEELEGVWTGKKTPQQALDTAVSRGDVLLHRFEQTNK.

The signal sequence occupies residues 1 to 25 (MFNNAIRKTSICVALTLAFSANAMA). Positions 67, 91, 146, 272, 309, 348, and 399 each coordinate sn-glycerol 3-phosphate.

Belongs to the bacterial solute-binding protein 1 family. The complex is composed of two ATP-binding proteins (UgpC), two transmembrane proteins (UgpA and UgpE) and a solute-binding protein (UgpB).

The protein resides in the periplasm. Functionally, part of the ABC transporter complex UgpBAEC involved in sn-glycerol-3-phosphate (G3P) import. Binds G3P. This Yersinia enterocolitica serotype O:8 / biotype 1B (strain NCTC 13174 / 8081) protein is sn-glycerol-3-phosphate-binding periplasmic protein UgpB (ugpB).